Here is a 66-residue protein sequence, read N- to C-terminus: Large ribosomal subunit protein bL33 (66 aa).

This sequence belongs to the bacterial ribosomal protein bL33 family.

This Wolbachia sp. subsp. Brugia malayi (strain TRS) protein is Large ribosomal subunit protein bL33.